The primary structure comprises 320 residues: Lipoyl synthase (320 aa).

[4Fe-4S] cluster is bound by residues cysteine 67, cysteine 72, cysteine 78, cysteine 93, cysteine 97, cysteine 100, and serine 307. The Radical SAM core domain maps to 79–296 (FNHGTATFMI…RDKAEKMGFE (218 aa)).

Belongs to the radical SAM superfamily. Lipoyl synthase family. Requires [4Fe-4S] cluster as cofactor.

It is found in the cytoplasm. The catalysed reaction is [[Fe-S] cluster scaffold protein carrying a second [4Fe-4S](2+) cluster] + N(6)-octanoyl-L-lysyl-[protein] + 2 oxidized [2Fe-2S]-[ferredoxin] + 2 S-adenosyl-L-methionine + 4 H(+) = [[Fe-S] cluster scaffold protein] + N(6)-[(R)-dihydrolipoyl]-L-lysyl-[protein] + 4 Fe(3+) + 2 hydrogen sulfide + 2 5'-deoxyadenosine + 2 L-methionine + 2 reduced [2Fe-2S]-[ferredoxin]. It participates in protein modification; protein lipoylation via endogenous pathway; protein N(6)-(lipoyl)lysine from octanoyl-[acyl-carrier-protein]: step 2/2. Catalyzes the radical-mediated insertion of two sulfur atoms into the C-6 and C-8 positions of the octanoyl moiety bound to the lipoyl domains of lipoate-dependent enzymes, thereby converting the octanoylated domains into lipoylated derivatives. The protein is Lipoyl synthase of Histophilus somni (strain 129Pt) (Haemophilus somnus).